The primary structure comprises 174 residues: Large ribosomal subunit protein uL16 (174 aa).

It belongs to the universal ribosomal protein uL16 family.

This is Large ribosomal subunit protein uL16 from Methanocaldococcus jannaschii (strain ATCC 43067 / DSM 2661 / JAL-1 / JCM 10045 / NBRC 100440) (Methanococcus jannaschii).